The sequence spans 214 residues: Predicted GPI-anchored protein 57 (214 aa).

Positions 1-18 (MLFTQLIILFTFISQIIC) are cleaved as a signal peptide. Residues 36–101 (RGSSGHSSGG…SSGSSSGSRN (66 aa)) form a disordered region. Positions 42–60 (SSGGGHSSSGSHSSGGGHS) are enriched in gly residues. Residues 76 to 85 (SGSSSGSSSG) show a composition bias toward low complexity. Residue N182 is glycosylated (N-linked (GlcNAc...) asparagine). Residue G191 is the site of GPI-anchor amidated glycine attachment. The propeptide at 192–214 (VSLNIPSTHFYVIGLAAAYSIVL) is removed in mature form.

It belongs to the PGA37 family.

Its subcellular location is the secreted. It is found in the cell membrane. Its function is as follows. Predicted GPI-anchored protein which may have a role during host infection. This is Predicted GPI-anchored protein 57 (PGA57) from Candida albicans (strain SC5314 / ATCC MYA-2876) (Yeast).